Here is a 260-residue protein sequence, read N- to C-terminus: Acetylglutamate kinase (260 aa).

Substrate is bound by residues 46 to 47 (GG), Arg-68, and Asn-160.

Belongs to the acetylglutamate kinase family. ArgB subfamily.

The protein localises to the cytoplasm. It catalyses the reaction N-acetyl-L-glutamate + ATP = N-acetyl-L-glutamyl 5-phosphate + ADP. Its pathway is amino-acid biosynthesis; L-arginine biosynthesis; N(2)-acetyl-L-ornithine from L-glutamate: step 2/4. Functionally, catalyzes the ATP-dependent phosphorylation of N-acetyl-L-glutamate. The polypeptide is Acetylglutamate kinase (Shewanella baltica (strain OS223)).